A 302-amino-acid chain; its full sequence is Putative cyclin-D6-1 (302 aa).

Belongs to the cyclin family. Cyclin D subfamily.

This is Putative cyclin-D6-1 (CYCD6-1) from Arabidopsis thaliana (Mouse-ear cress).